A 132-amino-acid chain; its full sequence is Small ribosomal subunit protein uS8 (132 aa).

The protein belongs to the universal ribosomal protein uS8 family. Part of the 30S ribosomal subunit. Contacts proteins S5 and S12.

Its function is as follows. One of the primary rRNA binding proteins, it binds directly to 16S rRNA central domain where it helps coordinate assembly of the platform of the 30S subunit. In Francisella tularensis subsp. holarctica (strain FTNF002-00 / FTA), this protein is Small ribosomal subunit protein uS8.